An 80-amino-acid chain; its full sequence is Large ribosomal subunit protein uL29 (80 aa).

The protein belongs to the universal ribosomal protein uL29 family.

The protein is Large ribosomal subunit protein uL29 (rpmC) of Mycobacterium leprae (strain TN).